Consider the following 409-residue polypeptide: LL-diaminopimelate aminotransferase (409 aa).

Tyr15 and Gly42 together coordinate substrate. Pyridoxal 5'-phosphate-binding positions include Tyr72, 108–109 (AK), Tyr132, Asn186, Tyr217, and 245–247 (SFS). Residues Lys109, Tyr132, and Asn186 each contribute to the substrate site. N6-(pyridoxal phosphate)lysine is present on Lys248. Arg256 and Asn291 together coordinate pyridoxal 5'-phosphate. Residues Asn291 and Arg386 each coordinate substrate.

The protein belongs to the class-I pyridoxal-phosphate-dependent aminotransferase family. LL-diaminopimelate aminotransferase subfamily. Homodimer. Requires pyridoxal 5'-phosphate as cofactor.

The enzyme catalyses (2S,6S)-2,6-diaminopimelate + 2-oxoglutarate = (S)-2,3,4,5-tetrahydrodipicolinate + L-glutamate + H2O + H(+). It functions in the pathway amino-acid biosynthesis; L-lysine biosynthesis via DAP pathway; LL-2,6-diaminopimelate from (S)-tetrahydrodipicolinate (aminotransferase route): step 1/1. In terms of biological role, involved in the synthesis of meso-diaminopimelate (m-DAP or DL-DAP), required for both lysine and peptidoglycan biosynthesis. Catalyzes the direct conversion of tetrahydrodipicolinate to LL-diaminopimelate. This chain is LL-diaminopimelate aminotransferase, found in Desulforapulum autotrophicum (strain ATCC 43914 / DSM 3382 / VKM B-1955 / HRM2) (Desulfobacterium autotrophicum).